Here is a 309-residue protein sequence, read N- to C-terminus: Ribonuclease Z (309 aa).

Positions 63, 65, 67, 68, 145, 216, and 274 each coordinate Zn(2+). Residue Asp67 is the Proton acceptor of the active site.

The protein belongs to the RNase Z family. In terms of assembly, homodimer. It depends on Zn(2+) as a cofactor.

The enzyme catalyses Endonucleolytic cleavage of RNA, removing extra 3' nucleotides from tRNA precursor, generating 3' termini of tRNAs. A 3'-hydroxy group is left at the tRNA terminus and a 5'-phosphoryl group is left at the trailer molecule.. Functionally, zinc phosphodiesterase, which displays some tRNA 3'-processing endonuclease activity. Probably involved in tRNA maturation, by removing a 3'-trailer from precursor tRNA. This chain is Ribonuclease Z, found in Streptococcus agalactiae serotype V (strain ATCC BAA-611 / 2603 V/R).